We begin with the raw amino-acid sequence, 533 residues long: Hydroxylamine reductase (533 aa).

C3, C6, C15, and C21 together coordinate [4Fe-4S] cluster. 8 residues coordinate hybrid [4Fe-2O-2S] cluster: H234, E258, C302, C389, C417, C442, E476, and K478. Position 389 is a cysteine persulfide (C389).

It belongs to the HCP family. The cofactor is [4Fe-4S] cluster. Requires hybrid [4Fe-2O-2S] cluster as cofactor.

The protein resides in the cytoplasm. The enzyme catalyses A + NH4(+) + H2O = hydroxylamine + AH2 + H(+). Functionally, catalyzes the reduction of hydroxylamine to form NH(3) and H(2)O. The polypeptide is Hydroxylamine reductase (Maridesulfovibrio salexigens (strain ATCC 14822 / DSM 2638 / NCIMB 8403 / VKM B-1763) (Desulfovibrio salexigens)).